A 354-amino-acid polypeptide reads, in one-letter code: UDP-3-O-acylglucosamine N-acyltransferase (354 aa).

H247 serves as the catalytic Proton acceptor.

It belongs to the transferase hexapeptide repeat family. LpxD subfamily. In terms of assembly, homotrimer.

It catalyses the reaction a UDP-3-O-[(3R)-3-hydroxyacyl]-alpha-D-glucosamine + a (3R)-hydroxyacyl-[ACP] = a UDP-2-N,3-O-bis[(3R)-3-hydroxyacyl]-alpha-D-glucosamine + holo-[ACP] + H(+). Its pathway is bacterial outer membrane biogenesis; LPS lipid A biosynthesis. Functionally, catalyzes the N-acylation of UDP-3-O-acylglucosamine using 3-hydroxyacyl-ACP as the acyl donor. Is involved in the biosynthesis of lipid A, a phosphorylated glycolipid that anchors the lipopolysaccharide to the outer membrane of the cell. This chain is UDP-3-O-acylglucosamine N-acyltransferase, found in Chlamydia trachomatis serovar A (strain ATCC VR-571B / DSM 19440 / HAR-13).